Reading from the N-terminus, the 393-residue chain is Formate-dependent phosphoribosylglycinamide formyltransferase (393 aa).

N(1)-(5-phospho-beta-D-ribosyl)glycinamide is bound by residues 22 to 23 (EL) and Glu82. ATP is bound by residues Arg114, Lys155, 160 to 165 (SSGKGQ), 195 to 198 (EGFV), and Glu203. One can recognise an ATP-grasp domain in the interval 119 to 308 (RLAAEELGLP…EFALHARAIL (190 aa)). Positions 267 and 279 each coordinate Mg(2+). Residues Asp286, Lys356, and 363–364 (RR) each bind N(1)-(5-phospho-beta-D-ribosyl)glycinamide.

The protein belongs to the PurK/PurT family. In terms of assembly, homodimer.

It carries out the reaction N(1)-(5-phospho-beta-D-ribosyl)glycinamide + formate + ATP = N(2)-formyl-N(1)-(5-phospho-beta-D-ribosyl)glycinamide + ADP + phosphate + H(+). Its pathway is purine metabolism; IMP biosynthesis via de novo pathway; N(2)-formyl-N(1)-(5-phospho-D-ribosyl)glycinamide from N(1)-(5-phospho-D-ribosyl)glycinamide (formate route): step 1/1. In terms of biological role, involved in the de novo purine biosynthesis. Catalyzes the transfer of formate to 5-phospho-ribosyl-glycinamide (GAR), producing 5-phospho-ribosyl-N-formylglycinamide (FGAR). Formate is provided by PurU via hydrolysis of 10-formyl-tetrahydrofolate. The sequence is that of Formate-dependent phosphoribosylglycinamide formyltransferase from Nitratidesulfovibrio vulgaris (strain DSM 19637 / Miyazaki F) (Desulfovibrio vulgaris).